The sequence spans 100 residues: Spleen trypsin inhibitor I (100 aa).

Residues 1–21 (MKMSRLCLSIALLVLLGTLAA) form the signal peptide. Residues 22–33 (STPGCDTSNQAK) constitute a propeptide that is removed on maturation. The 51-residue stretch at 40–90 (CLEPPYTGPCKAKMIRYFYNAKAGFCETFVYGGCKAKSNNFRSAEDCMRTC) folds into the BPTI/Kunitz inhibitor domain. 3 disulfide bridges follow: Cys-40-Cys-90, Cys-49-Cys-73, and Cys-65-Cys-86. A propeptide is located at residue Leu-100.

It is found in the secreted. In Bos taurus (Bovine), this protein is Spleen trypsin inhibitor I.